The sequence spans 1488 residues: Eukaryotic translation initiation factor 4G (1488 aa).

3 disordered regions span residues 196–320 (VQHR…GQTS), 337–367 (DSEKVDLTSKVSGLTSATSESSISPILGKSE), and 415–707 (THQI…MTEA). Basic and acidic residues-rich tracts occupy residues 216-244 (VSEKESKAPSIPEKHSKESKAPSAVEKHP) and 274-299 (ADEKKESLPMTDSLKDNKKNATRNDT). Polar residues-rich tracts occupy residues 300–310 (KNLPQQPQSAS), 345–360 (SKVSGLTSATSESSIS), 448–464 (SLATSKPGNSDATSFVT), and 473–495 (CTTSVPEDHSLMNTSHNKDTQTL). Residues 496-520 (SASVDASDVSEVNSGTSSESTSQST) are compositionally biased toward low complexity. Residues 555–566 (QVKHADGAKDES) show a composition bias toward basic and acidic residues. Over residues 627–646 (QEQSESVATSDGADSSSTVD) the composition is skewed to polar residues. Positions 651-671 (LPEESEREVMCEDDGKKKVEP) are enriched in basic and acidic residues. Positions 683 to 696 (PKLQSSDSGNQASA) are enriched in polar residues. Positions 709-721 (GRKKYSRDFLLTF) are EIF4E-binding. The span at 753-784 (DREPHPSSARGSDRPTSRGDRRGPAMDDDKWL) shows a compositional bias: basic and acidic residues. 3 disordered regions span residues 753 to 795 (DREP…PNRD), 974 to 1000 (RGEREEAEADKTEEEGEIKQTKEEREE), and 1107 to 1299 (WQQR…SEEE). The MIF4G domain occupies 883 to 1106 (QRQLKAILNK…RDSIDLRKNK (224 aa)). Positions 978 to 989 (EEAEADKTEEEG) are enriched in acidic residues. Composition is skewed to basic and acidic residues over residues 990 to 1000 (EIKQTKEEREE), 1111 to 1132 (RKVDGPKKIDEVHRDAAQERHA), 1181 to 1191 (IRYEQERHQFD), and 1254 to 1267 (TREDTSSRIPDRFS). A compositionally biased stretch (polar residues) spans 1273–1294 (AAQSASSSHRPASQEGRSGNKS). The region spanning 1299–1423 (ELREKSIATI…VLQDVGKLIE (125 aa)) is the MI domain.

Belongs to the eukaryotic initiation factor 4G family. In terms of assembly, EIF4F is a multi-subunit complex, the composition of which varies with external and internal environmental conditions. It is composed of at least EIF4A, EIF4E and EIF4G. In higher plants two isoforms of EIF4F have been identified, named isoform EIF4F and isoform EIF(iso)4F. Isoform EIF4F has subunits p220 and p26, whereas isoform EIF(iso)4F has subunits p82 and p28.

Its function is as follows. Component of the protein complex eIF4F, which is involved in the recognition of the mRNA cap, ATP-dependent unwinding of 5'-terminal secondary structure and recruitment of mRNA to the ribosome. This is Eukaryotic translation initiation factor 4G from Triticum aestivum (Wheat).